Here is a 315-residue protein sequence, read N- to C-terminus: Methionyl-tRNA formyltransferase (315 aa).

The interval 2-189 (SESLRIIFAG…LITTLKQLAD (188 aa)) is N-terminal domain. 113-116 (SLLP) lines the (6S)-5,6,7,8-tetrahydrofolate pocket. A C-terminal domain region spans residues 210–315 (KEEARIDWSL…EWFVPGNRLA (106 aa)).

It belongs to the Fmt family.

The catalysed reaction is L-methionyl-tRNA(fMet) + (6R)-10-formyltetrahydrofolate = N-formyl-L-methionyl-tRNA(fMet) + (6S)-5,6,7,8-tetrahydrofolate + H(+). Attaches a formyl group to the free amino group of methionyl-tRNA(fMet). The formyl group appears to play a dual role in the initiator identity of N-formylmethionyl-tRNA by promoting its recognition by IF2 and preventing the misappropriation of this tRNA by the elongation apparatus. The sequence is that of Methionyl-tRNA formyltransferase from Escherichia coli O6:H1 (strain CFT073 / ATCC 700928 / UPEC).